Reading from the N-terminus, the 71-residue chain is Conotoxin Bu23 (71 aa).

Residues methionine 1 to serine 21 form the signal peptide. Positions leucine 22–lysine 37 are excised as a propeptide. Asparagine 70 is modified (asparagine amide).

It belongs to the conotoxin A superfamily. In terms of processing, contains 3 disulfide bonds. They are not indicated here, since framework IV presents two different connectivities (I-V, II-III, IV-VI and I-III, II-V, IV-VI). In terms of tissue distribution, expressed by the venom duct.

Its subcellular location is the secreted. The polypeptide is Conotoxin Bu23 (Conus bullatus (Bubble cone)).